The chain runs to 426 residues: Glucose-1-phosphate adenylyltransferase (426 aa).

Alpha-D-glucose 1-phosphate contacts are provided by residues Y100, G165, 180–181, and S191; that span reads EK.

Belongs to the bacterial/plant glucose-1-phosphate adenylyltransferase family. Homotetramer.

It catalyses the reaction alpha-D-glucose 1-phosphate + ATP + H(+) = ADP-alpha-D-glucose + diphosphate. It functions in the pathway glycan biosynthesis; glycogen biosynthesis. Involved in the biosynthesis of ADP-glucose, a building block required for the elongation reactions to produce glycogen. Catalyzes the reaction between ATP and alpha-D-glucose 1-phosphate (G1P) to produce pyrophosphate and ADP-Glc. This Acetivibrio thermocellus (strain ATCC 27405 / DSM 1237 / JCM 9322 / NBRC 103400 / NCIMB 10682 / NRRL B-4536 / VPI 7372) (Clostridium thermocellum) protein is Glucose-1-phosphate adenylyltransferase.